Reading from the N-terminus, the 500-residue chain is Flt3-interacting zinc finger protein 1 (500 aa).

N-acetylmethionine is present on Met-1. A disordered region spans residues 1–24 (MEDSSLPVVPAPIAAPGPAPSATA). Positions 9–19 (VPAPIAAPGPA) are enriched in pro residues. 6 C2H2-type zinc fingers span residues 29–51 (FHCS…FARH), 57–79 (HACP…LRSH), 85–107 (YRCS…QVVH), 113–136 (YCCL…KRQH), 204–226 (FACG…WAAH), and 232–254 (FKCP…KLTH). Disordered regions lie at residues 255-284 (DLQG…ASEV) and 306-328 (KLEA…AAAE). Over residues 256–267 (LQGSNAPPTQVW) the composition is skewed to polar residues. 5 C2H2-type zinc fingers span residues 336–357 (YQCD…LEAH), 363–386 (YGCG…RASH), 418–440 (FGCS…VLVH), 446–468 (FPCL…RLLH), and 474–496 (FPCH…LKLH). Residues 383–415 (RASHGEGSGEAAPDGEGNQAAGGPGPGSSSRSK) are disordered.

In terms of assembly, interacts with FLT3 cytoplasmic catalytic domain, following receptor stimulation, in a kinase-independent manner. Does not interact with other structurally related receptor tyrosine kinases, including KIT, CSF1R and PDGFR. Interacts with NRL. Widely expressed. In the retina, highest expression in the ganglion cell layer.

The protein resides in the cytoplasm. It localises to the nucleus. In terms of biological role, may be a transcriptional repressor of NRL function in photoreceptors. Does not repress CRX-mediated transactivation. The polypeptide is Flt3-interacting zinc finger protein 1 (Fiz1) (Mus musculus (Mouse)).